The primary structure comprises 122 residues: NADH-quinone oxidoreductase subunit A (122 aa).

The next 3 helical transmembrane spans lie at 10 to 30 (MIVL…LTLG), 66 to 86 (IFAL…PWAV), and 91 to 111 (LGLF…VGLA).

It belongs to the complex I subunit 3 family. NDH-1 is composed of 14 different subunits. Subunits NuoA, H, J, K, L, M, N constitute the membrane sector of the complex.

Its subcellular location is the cell membrane. The enzyme catalyses a quinone + NADH + 5 H(+)(in) = a quinol + NAD(+) + 4 H(+)(out). NDH-1 shuttles electrons from NADH, via FMN and iron-sulfur (Fe-S) centers, to quinones in the respiratory chain. The immediate electron acceptor for the enzyme in this species is believed to be a menaquinone. Couples the redox reaction to proton translocation (for every two electrons transferred, four hydrogen ions are translocated across the cytoplasmic membrane), and thus conserves the redox energy in a proton gradient. This is NADH-quinone oxidoreductase subunit A from Bacillus cereus (strain ATCC 14579 / DSM 31 / CCUG 7414 / JCM 2152 / NBRC 15305 / NCIMB 9373 / NCTC 2599 / NRRL B-3711).